Here is a 243-residue protein sequence, read N- to C-terminus: Probable heat shock transcription factor (243 aa).

A DNA-binding region spans residues 9–102; it reads INKFIRRLYK…GDNLLPCIQR (94 aa). The segment at 121–164 is involved in trimerization; that stretch reads QLQDLLQYLNNQNFKLEGEIKSLKDRVDQQDCTINGLVQLLTRI.

This sequence belongs to the HSF family. Homotrimer. Homotrimerization increases the affinity of HSF1 to DNA.

Its subcellular location is the nucleus. In terms of biological role, DNA-binding transcription factor that specifically binds heat shock promoter elements (HSE) and activates transcription. The chain is Probable heat shock transcription factor from Vairimorpha ceranae (strain BRL01) (Microsporidian parasite).